The following is a 173-amino-acid chain: Adenine phosphoribosyltransferase (173 aa).

It belongs to the purine/pyrimidine phosphoribosyltransferase family. In terms of assembly, homodimer.

The protein resides in the cytoplasm. It catalyses the reaction AMP + diphosphate = 5-phospho-alpha-D-ribose 1-diphosphate + adenine. It participates in purine metabolism; AMP biosynthesis via salvage pathway; AMP from adenine: step 1/1. Catalyzes a salvage reaction resulting in the formation of AMP, that is energically less costly than de novo synthesis. This Desulfitobacterium hafniense (strain Y51) protein is Adenine phosphoribosyltransferase.